Consider the following 243-residue polypeptide: PF03932 family protein CutC (243 aa).

Belongs to the CutC family.

The protein resides in the cytoplasm. The polypeptide is PF03932 family protein CutC (Histophilus somni (strain 2336) (Haemophilus somnus)).